A 471-amino-acid polypeptide reads, in one-letter code: Phosphatidylserine synthase 1 (471 aa).

An N-acetylalanine modification is found at Ala2. The Cytoplasmic segment spans residues 2–35 (ASCVGSRTLSKDDVNYRMHFRMINEQQVEDITID). A helical transmembrane segment spans residues 36–56 (FFYRPHTITLLSFTIVSLMYF). Over 57–72 (AFTRDDSVPEDNIWRG) the chain is Lumenal. Residues 73–93 (ILSVIFFFLIISVLAFPNGPF) traverse the membrane as a helical segment. Residues 94–102 (TRPHPALWR) lie on the Cytoplasmic side of the membrane. Residues 103–123 (MVFGLSVLYFLFLVFLLFLNF) form a helical membrane-spanning segment. The Lumenal portion of the chain corresponds to 124 to 160 (EQVKSLMYWLDPNLRYATREADIMEYAVNCHVITWER). Residues 161-181 (IVSHFDIFAFGHFWGWAMKAL) form a helical membrane-spanning segment. Topologically, residues 182–186 (LIRSY) are cytoplasmic. A helical transmembrane segment spans residues 187–207 (GLCWTISITWELTELFFMHLL). Residues 208–216 (PNFAECWWD) are Lumenal-facing. Residues 217 to 237 (QVILDILLCNGGGIWLGMVVC) form a helical membrane-spanning segment. Over 238–286 (RFLEMRTYHWASFKDIHTTTGKIKRAVLQFTPASWTYVRWFDPKSSFQR) the chain is Cytoplasmic. The chain crosses the membrane as a helical span at residues 287 to 307 (VAGVYLFMIIWQLTELNTFFL). At 308 to 309 (KH) the chain is on the lumenal side. A helical membrane pass occupies residues 310–330 (IFVFQASHPLSWCRILFIGCI). Residues 331–355 (TAPTVRQYYAYLTDTQCKRVGTQCW) lie on the Cytoplasmic side of the membrane. A helical transmembrane segment spans residues 356–376 (VFGVIGFLEAIVCIKFGQDLF). Residues 377–380 (SKTQ) lie on the Lumenal side of the membrane. The chain crosses the membrane as a helical span at residues 381-401 (ILYVVFWLLCVAFTTFLCLYG). At 402–471 (MVWYAEHYGH…SKVTNGVGKK (70 aa)) the chain is on the cytoplasmic side. Ser417, Ser440, and Ser452 each carry phosphoserine. The interval 426-471 (ISWHHGKGSKGSEDSPPKHSSNNESHSSRRRNRHSKSKVTNGVGKK) is disordered. Residues 453–462 (SRRRNRHSKS) show a composition bias toward basic residues.

Belongs to the phosphatidyl serine synthase family.

The protein localises to the endoplasmic reticulum membrane. The catalysed reaction is a 1,2-diacyl-sn-glycero-3-phosphoethanolamine + L-serine = a 1,2-diacyl-sn-glycero-3-phospho-L-serine + ethanolamine. It carries out the reaction a 1,2-diacyl-sn-glycero-3-phosphocholine + L-serine = a 1,2-diacyl-sn-glycero-3-phospho-L-serine + choline. Its pathway is phospholipid metabolism; phosphatidylserine biosynthesis. Inhibited by exogenous phosphatidylserine. Functionally, catalyzes a base-exchange reaction in which the polar head group of phosphatidylethanolamine (PE) or phosphatidylcholine (PC) is replaced by L-serine. Catalyzes mainly the conversion of phosphatidylcholine. Also converts, in vitro and to a lesser extent, phosphatidylethanolamine. In Cricetulus griseus (Chinese hamster), this protein is Phosphatidylserine synthase 1 (PTDSS1).